Reading from the N-terminus, the 1434-residue chain is DNA-directed RNA polymerase subunit beta' (1434 aa).

Zn(2+) is bound by residues C70, C72, C85, and C88. Residues D460, D462, and D464 each coordinate Mg(2+). Residues C840, C914, C921, and C924 each coordinate Zn(2+).

The protein belongs to the RNA polymerase beta' chain family. The RNAP catalytic core consists of 2 alpha, 1 beta, 1 beta' and 1 omega subunit. When a sigma factor is associated with the core the holoenzyme is formed, which can initiate transcription. It depends on Mg(2+) as a cofactor. Zn(2+) is required as a cofactor.

It catalyses the reaction RNA(n) + a ribonucleoside 5'-triphosphate = RNA(n+1) + diphosphate. Its function is as follows. DNA-dependent RNA polymerase catalyzes the transcription of DNA into RNA using the four ribonucleoside triphosphates as substrates. The chain is DNA-directed RNA polymerase subunit beta' from Tolumonas auensis (strain DSM 9187 / NBRC 110442 / TA 4).